The following is a 264-amino-acid chain: tRNA (guanine-N(1)-)-methyltransferase (264 aa).

S-adenosyl-L-methionine-binding positions include G125 and 145-150 (LGDFVL).

Belongs to the RNA methyltransferase TrmD family. In terms of assembly, homodimer.

It localises to the cytoplasm. The catalysed reaction is guanosine(37) in tRNA + S-adenosyl-L-methionine = N(1)-methylguanosine(37) in tRNA + S-adenosyl-L-homocysteine + H(+). Functionally, specifically methylates guanosine-37 in various tRNAs. This chain is tRNA (guanine-N(1)-)-methyltransferase, found in Burkholderia multivorans (strain ATCC 17616 / 249).